Consider the following 367-residue polypeptide: Alcohol dehydrogenase 2 (367 aa).

Zn(2+) contacts are provided by C48, H74, C107, C110, C113, C121, and C163. Residues 187-193, D212, K216, 286-288, and R361 contribute to the NAD(+) site; these read GAGGGLG and VGI.

This sequence belongs to the zinc-containing alcohol dehydrogenase family. As to quaternary structure, homotetramer. Requires Zn(2+) as cofactor.

It localises to the cytoplasm. It catalyses the reaction a primary alcohol + NAD(+) = an aldehyde + NADH + H(+). It carries out the reaction a secondary alcohol + NAD(+) = a ketone + NADH + H(+). This chain is Alcohol dehydrogenase 2 (alcB), found in Emericella nidulans (strain FGSC A4 / ATCC 38163 / CBS 112.46 / NRRL 194 / M139) (Aspergillus nidulans).